A 133-amino-acid polypeptide reads, in one-letter code: UPF0102 protein bll0669 (133 aa).

This sequence belongs to the UPF0102 family.

The protein is UPF0102 protein bll0669 of Bradyrhizobium diazoefficiens (strain JCM 10833 / BCRC 13528 / IAM 13628 / NBRC 14792 / USDA 110).